The primary structure comprises 319 residues: Type II secretion system protein C 2 (319 aa).

The Cytoplasmic segment spans residues 1–42; that stretch reads MARVVFRDARIYLIQWLTKIRHTLNQRQSLNTDKEHLRKIVR. The helical transmembrane segment at 43–65 threads the bilayer; sequence GMFWLMLLIISAKVAHSLWRYFS. The Periplasmic segment spans residues 66–319; sequence FSAEYTAVSP…ARHDISIALR (254 aa).

The protein belongs to the GSP C family. In terms of assembly, interacts with outer cell membrane protein GspD2 in the periplasm.

The protein localises to the cell inner membrane. Functionally, involved in a type II secretion system (T2SS, formerly general secretion pathway, GSP) for the export of folded proteins across the outer membrane. This is Type II secretion system protein C 2 (gspC2) from Escherichia coli O78:H11 (strain H10407 / ETEC).